The chain runs to 227 residues: Prolactin-5A1 (227 aa).

The first 27 residues, 1–27 (MQIQPHPSGALLLLLLSNLLMWENVAS), serve as a signal peptide directing secretion. Residue Asn-47 is glycosylated (N-linked (GlcNAc...) asparagine). Cysteines 85 and 204 form a disulfide.

It belongs to the somatotropin/prolactin family. Expressed specifically in placenta. Highly expressed in invasive trophoblast cells lining the central placental vessel.

It localises to the secreted. The polypeptide is Prolactin-5A1 (Prl5a1) (Rattus norvegicus (Rat)).